The primary structure comprises 274 residues: MEIEVKSQTDDEIVFIVRDAEVPFINAIRRCAMVNVPKIAIEDVNIMRNDSAMFNEVLAHRLGLTPLVSNMDAIEGLPLPGDDDYEENNSVMFSLKEEGPKVVYSKDLISSDSKIKPVYDTIPLVKLKEGEKLNIEAVAKVGYGKEHAKWMPTTVCVYKQYPEITFNEDVGIDYECADACPRGVLKSDKRSKEIKILDIEDCAMCKSCVRASIRNAQSEGKDESYINVGYHENDFIFRIETDGSMPPKEVLLQACDELGEKADKFIRFSEGGSK.

The [3Fe-4S] cluster site is built by cysteine 202, cysteine 205, and cysteine 208.

It belongs to the archaeal Rpo3/eukaryotic RPB3 RNA polymerase subunit family. As to quaternary structure, part of the RNA polymerase complex. [3Fe-4S] cluster is required as a cofactor.

The protein resides in the cytoplasm. The enzyme catalyses RNA(n) + a ribonucleoside 5'-triphosphate = RNA(n+1) + diphosphate. DNA-dependent RNA polymerase (RNAP) catalyzes the transcription of DNA into RNA using the four ribonucleoside triphosphates as substrates. This Methanobrevibacter smithii (strain ATCC 35061 / DSM 861 / OCM 144 / PS) protein is DNA-directed RNA polymerase subunit Rpo3.